Reading from the N-terminus, the 393-residue chain is Elongation factor Tu (393 aa).

A tr-type G domain is found at 10-203 (KPHVNIGTIG…AVDDYIPEPV (194 aa)). Positions 19 to 26 (GHVDHGKT) are G1. 19-26 (GHVDHGKT) is a binding site for GTP. Residue threonine 26 participates in Mg(2+) binding. Positions 60–64 (GITIS) are G2. The interval 81–84 (DCPG) is G3. Residues 81–85 (DCPGH) and 136–139 (NKVD) contribute to the GTP site. Residues 136–139 (NKVD) are G4. The tract at residues 173–175 (SAL) is G5.

It belongs to the TRAFAC class translation factor GTPase superfamily. Classic translation factor GTPase family. EF-Tu/EF-1A subfamily. In terms of assembly, monomer.

Its subcellular location is the cytoplasm. It catalyses the reaction GTP + H2O = GDP + phosphate + H(+). Its function is as follows. GTP hydrolase that promotes the GTP-dependent binding of aminoacyl-tRNA to the A-site of ribosomes during protein biosynthesis. This Chlorobium phaeobacteroides (strain BS1) protein is Elongation factor Tu.